Reading from the N-terminus, the 105-residue chain is N(4)-acetylcytidine amidohydrolase (105 aa).

In terms of domain architecture, ASCH spans 7-93 (TFFERFEHDI…VIAEIYPGLE (87 aa)). The active-site Proton acceptor is the Lys21. Thr24 functions as the Nucleophile in the catalytic mechanism. The Proton donor role is filled by Glu74.

The protein belongs to the N(4)-acetylcytidine amidohydrolase family.

The enzyme catalyses N(4)-acetylcytidine + H2O = cytidine + acetate + H(+). It carries out the reaction N(4)-acetyl-2'-deoxycytidine + H2O = 2'-deoxycytidine + acetate + H(+). It catalyses the reaction N(4)-acetylcytosine + H2O = cytosine + acetate + H(+). Catalyzes the hydrolysis of N(4)-acetylcytidine (ac4C). The sequence is that of N(4)-acetylcytidine amidohydrolase from Shewanella baltica (strain OS195).